A 342-amino-acid polypeptide reads, in one-letter code: Zinc transporter ZIP11 (342 aa).

The next 7 helical transmembrane spans lie at 12–32, 44–64, 72–92, 194–214, 263–285, 290–307, and 322–342; these read LLGTFFTWGMTAAGAALVFVF, LGFAAGVMLAASYWSLLAPAV, GFGAFAFFPVAVGFTLGAAFV, IALLILAITIHNVPEGLAVGV, FWYGQLSGMVEPLAGVFGAFAVV, ILPYALAFAAGAMVYVVM, and LASWASILGFVVMMSLDVGLG.

This sequence belongs to the ZIP transporter (TC 2.A.5) family.

The protein localises to the cell membrane. It is found in the nucleus. Its subcellular location is the cytoplasm. It localises to the golgi apparatus. It carries out the reaction Zn(2+)(in) = Zn(2+)(out). The enzyme catalyses Cu(2+)(in) = Cu(2+)(out). Its function is as follows. Zinc importer that regulates cytosolic zinc concentrations either via zinc influx from the extracellular compartment or efflux from intracellular organelles such as Golgi apparatus. May transport copper ions as well. The transport mechanism remains to be elucidated. This is Zinc transporter ZIP11 (SLC39A11) from Homo sapiens (Human).